Here is a 127-residue protein sequence, read N- to C-terminus: Anti-adapter protein IraD (127 aa).

It belongs to the GpW/Gp25 family. IraD subfamily. As to quaternary structure, interacts with RssB.

Its subcellular location is the cytoplasm. In terms of biological role, inhibits RpoS proteolysis by regulating RssB activity, thereby increasing the stability of the sigma stress factor RpoS during oxidative stress. Its effect on RpoS stability is due to its interaction with RssB, which probably blocks the interaction of RssB with RpoS, and the consequent delivery of the RssB-RpoS complex to the ClpXP protein degradation pathway. The sequence is that of Anti-adapter protein IraD from Escherichia coli (strain SMS-3-5 / SECEC).